The chain runs to 199 residues: Shikimate kinase (199 aa).

An ATP-binding site is contributed by 32–37 (GSGKTS). A Mg(2+)-binding site is contributed by Thr36. Substrate is bound by residues Asp54, Arg78, and Gly100. Residue Arg138 participates in ATP binding. A substrate-binding site is contributed by Arg157.

Belongs to the shikimate kinase family. In terms of assembly, monomer. Requires Mg(2+) as cofactor.

The protein resides in the cytoplasm. It carries out the reaction shikimate + ATP = 3-phosphoshikimate + ADP + H(+). Its pathway is metabolic intermediate biosynthesis; chorismate biosynthesis; chorismate from D-erythrose 4-phosphate and phosphoenolpyruvate: step 5/7. Functionally, catalyzes the specific phosphorylation of the 3-hydroxyl group of shikimic acid using ATP as a cosubstrate. In Synechococcus sp. (strain CC9605), this protein is Shikimate kinase.